The following is a 97-amino-acid chain: Protein transport protein SFT1 (97 aa).

Topologically, residues 1–74 are cytoplasmic; the sequence is MSNSRYSQTE…RLTRSLKAGN (74 aa). The 63-residue stretch at 7-69 folds into the t-SNARE coiled-coil homology domain; that stretch reads SQTESNNDRK…KNSSSRLTRS (63 aa). Residues 75-94 form a helical; Anchor for type IV membrane protein membrane-spanning segment; it reads SIWRMVGLALLIFFILYTLF. The Lumenal segment spans residues 95-97; the sequence is KLF.

As to quaternary structure, component of a SNARE complex consisting of SED5, GOS1, YKT6 and SFT1.

The protein localises to the golgi apparatus membrane. In terms of biological role, vesicle SNARE required for retrograde transport within the Golgi complex. The protein is Protein transport protein SFT1 (SFT1) of Saccharomyces cerevisiae (strain ATCC 204508 / S288c) (Baker's yeast).